Reading from the N-terminus, the 311-residue chain is 4-hydroxyproline 2-epimerase (311 aa).

Catalysis depends on cysteine 88, which acts as the Proton acceptor. Substrate contacts are provided by residues 89–90, histidine 208, and aspartate 232; that span reads GH. Cysteine 236 acts as the Proton donor in catalysis. 237-238 is a substrate binding site; that stretch reads GT.

Belongs to the proline racemase family.

It carries out the reaction trans-4-hydroxy-L-proline = cis-4-hydroxy-D-proline. Its function is as follows. Catalyzes the epimerization of trans-4-hydroxy-L-proline (t4LHyp) to cis-4-hydroxy-D-proline (c4DHyp). Is likely involved in a degradation pathway that converts t4LHyp to alpha-ketoglutarate. Displays no proline racemase activity. This Chromohalobacter salexigens (strain ATCC BAA-138 / DSM 3043 / CIP 106854 / NCIMB 13768 / 1H11) protein is 4-hydroxyproline 2-epimerase.